The sequence spans 136 residues: Gonadotropin subunit beta-2 (136 aa).

The N-terminal stretch at 1–21 (MVCLFLGASSFIWSLAPAAAA) is a signal peptide. Intrachain disulfides connect C27/C75, C41/C90, C44/C128, C52/C106, C56/C108, and C111/C118. N31 carries an N-linked (GlcNAc...) asparagine glycan.

The protein belongs to the glycoprotein hormones subunit beta family. In terms of assembly, heterodimer of an alpha and a beta chain.

It localises to the secreted. Its function is as follows. Involved in gametogenesis and steroidogenesis. The polypeptide is Gonadotropin subunit beta-2 (cgbb) (Fundulus heteroclitus (Killifish)).